The primary structure comprises 310 residues: Probable cell division protein WhiA (310 aa).

The H-T-H motif DNA-binding region spans 274 to 308 (SLKELGTLVPGGPISKSGINHRLRKINQFAEQLQK).

Belongs to the WhiA family.

Involved in cell division and chromosome segregation. The polypeptide is Probable cell division protein WhiA (Lactiplantibacillus plantarum (strain ATCC BAA-793 / NCIMB 8826 / WCFS1) (Lactobacillus plantarum)).